Consider the following 862-residue polypeptide: Leucine--tRNA ligase (862 aa).

The 'HIGH' region motif lies at 49-59 (PYPSGRIHMGH). Residues 625-629 (KMSKS) carry the 'KMSKS' region motif. ATP is bound at residue Lys628.

This sequence belongs to the class-I aminoacyl-tRNA synthetase family.

It localises to the cytoplasm. The enzyme catalyses tRNA(Leu) + L-leucine + ATP = L-leucyl-tRNA(Leu) + AMP + diphosphate. This Paramagnetospirillum magneticum (strain ATCC 700264 / AMB-1) (Magnetospirillum magneticum) protein is Leucine--tRNA ligase.